We begin with the raw amino-acid sequence, 192 residues long: Probable nicotinate-nucleotide adenylyltransferase (192 aa).

This sequence belongs to the NadD family.

It carries out the reaction nicotinate beta-D-ribonucleotide + ATP + H(+) = deamido-NAD(+) + diphosphate. It participates in cofactor biosynthesis; NAD(+) biosynthesis; deamido-NAD(+) from nicotinate D-ribonucleotide: step 1/1. Catalyzes the reversible adenylation of nicotinate mononucleotide (NaMN) to nicotinic acid adenine dinucleotide (NaAD). This Bradyrhizobium sp. (strain BTAi1 / ATCC BAA-1182) protein is Probable nicotinate-nucleotide adenylyltransferase.